Reading from the N-terminus, the 554-residue chain is MKSDIEICQTATLIRMKTIASNLGLHDDDITPQGRYKAKVNIDALKHLEDKPSGKLILVTAITPTPLGEGKTVTTIGLAQGLAKLGESVSACIRQPSMGPVFGVKGGAAGGGYSQVAPMEELNLHLTGDIHAITAAHNLASAAIDARIYHEQRLGYNIFSEKNDLPALRIDPTQVVWKRVMDHNDRALRMVTIGKNEDNKTINGYEREDGFDITAASELMAILALATDLQDLRQRIGRIVVAYNLDGLPITTEDLQVAGAMTVTMKFAINPTLMQTLEGVPTFVHSGPFANIAHGNSSIIADNIALKLTDYTVLVATLRGIKANSGLFPLSSGQSLPKALFVPNQEALIAGLDNLHWHIKNCAKYGLPVVVAINRFPEDTQEELDFLADWVTSQSSELNLDVAISEAFGKGGEGTRELAQKVLIACAQETEFTPLYTPDMSLLDKLTAVAIKGYGAERLELSEKAQQQLAMFEQLGYQHLSVCMAKTPASISTDGNIKGAPTDFIVPIRELRLCAGAGFVYALCGNVMTMPGLPEKPAFMNLDIDSNGNITGLS.

65–72 (TPLGEGKT) is a binding site for ATP.

The protein belongs to the formate--tetrahydrofolate ligase family.

The catalysed reaction is (6S)-5,6,7,8-tetrahydrofolate + formate + ATP = (6R)-10-formyltetrahydrofolate + ADP + phosphate. The protein operates within one-carbon metabolism; tetrahydrofolate interconversion. This is Formate--tetrahydrofolate ligase from Aliivibrio salmonicida (strain LFI1238) (Vibrio salmonicida (strain LFI1238)).